A 216-amino-acid polypeptide reads, in one-letter code: Cytochrome c biogenesis ATP-binding export protein CcmA (216 aa).

In terms of domain architecture, ABC transporter spans 5-216; it reads ISVDTLLSAS…RKIRLDYRFV (212 aa). 43-50 is a binding site for ATP; the sequence is GPNGAGKT.

The protein belongs to the ABC transporter superfamily. CcmA exporter (TC 3.A.1.107) family. As to quaternary structure, the complex is composed of two ATP-binding proteins (CcmA) and two transmembrane proteins (CcmB).

It localises to the cell inner membrane. The catalysed reaction is heme b(in) + ATP + H2O = heme b(out) + ADP + phosphate + H(+). In terms of biological role, part of the ABC transporter complex CcmAB involved in the biogenesis of c-type cytochromes; once thought to export heme, this seems not to be the case, but its exact role is uncertain. Responsible for energy coupling to the transport system. This chain is Cytochrome c biogenesis ATP-binding export protein CcmA, found in Shewanella oneidensis (strain ATCC 700550 / JCM 31522 / CIP 106686 / LMG 19005 / NCIMB 14063 / MR-1).